We begin with the raw amino-acid sequence, 338 residues long: GTPase Obg (338 aa).

An Obg domain is found at 1-159 (MKFIDEVTLF…AKLRLELKLM (159 aa)). In terms of domain architecture, OBG-type G spans 160-331 (ADVGLLGLPN…LLDEIARRLW (172 aa)). Residues 166–173 (GLPNAGKS), 191–195 (FTTIK), 213–216 (DIPG), 283–286 (TKLD), and 312–314 (SSA) contribute to the GTP site. Residues S173 and T193 each contribute to the Mg(2+) site.

The protein belongs to the TRAFAC class OBG-HflX-like GTPase superfamily. OBG GTPase family. Monomer. Mg(2+) serves as cofactor.

Its subcellular location is the cytoplasm. Its function is as follows. An essential GTPase which binds GTP, GDP and possibly (p)ppGpp with moderate affinity, with high nucleotide exchange rates and a fairly low GTP hydrolysis rate. Plays a role in control of the cell cycle, stress response, ribosome biogenesis and in those bacteria that undergo differentiation, in morphogenesis control. This chain is GTPase Obg, found in Pelobacter propionicus (strain DSM 2379 / NBRC 103807 / OttBd1).